Consider the following 1799-residue polypeptide: 1,3-beta-glucan synthase component FKS1 (1799 aa).

Over residues 1–11 (MSYPNPPPPPK) the composition is skewed to pro residues. The interval 1–136 (MSYPNPPPPP…SNAGHRPRDP (136 aa)) is disordered. Over residues 12-23 (GSASFSSSSSDP) the composition is skewed to low complexity. The span at 51 to 64 (GAGGAGVAPPGQGG) shows a compositional bias: gly residues. Residues 91–101 (ASESGWSQNEP) are compositionally biased toward polar residues. The next 16 helical transmembrane spans lie at 431–451 (IWVL…PSIY), 470–490 (LGGF…FSYI), 504–524 (LIFL…IAFF), 530–550 (VALI…IAFA), 591–611 (FLLW…FLTL), 648–668 (VMFV…YVIW), 1268–1288 (NILV…LGTL), 1323–1343 (CIIS…VQEL), 1422–1442 (LVLL…YFWI), 1446–1466 (GLCV…DFII), 1527–1547 (IGEI…YLFI), 1563–1583 (IAII…TLFL), 1605–1625 (ALAH…LWFL), 1635–1655 (LGII…IAVF), 1704–1724 (DFIA…IPYF), and 1762–1782 (GLLY…PIIF).

Belongs to the glycosyltransferase 48 family. As to quaternary structure, component of the 1,3-beta-glucan synthase (GS) complex composed of a catalytic subunit FKS1 and a regulatory subunit RHO1.

It localises to the cell membrane. It carries out the reaction [(1-&gt;3)-beta-D-glucosyl](n) + UDP-alpha-D-glucose = [(1-&gt;3)-beta-D-glucosyl](n+1) + UDP + H(+). Its activity is regulated as follows. Activated by magnesium ions. Inhibited by caspofungin and cilofungin. Functionally, catalytic subunit of the 1,3-beta-glucan synthase (GS) complex. Synthesizes 1,3-beta-glucan, a major structural component of the yeast cell wall. Involved in cell wall synthesis, maintenance and remodeling. The protein is 1,3-beta-glucan synthase component FKS1 of Cryptococcus neoformans var. grubii serotype A (strain H99 / ATCC 208821 / CBS 10515 / FGSC 9487) (Filobasidiella neoformans var. grubii).